The following is a 345-amino-acid chain: Delta(1)-pyrroline-2-carboxylate reductase (345 aa).

The Charge relay system role is filled by serine 47. The active-site Proton donor is histidine 48. Residue arginine 52 coordinates substrate. Residue histidine 121 to leucine 125 coordinates NADP(+). Position 161 (threonine 161) interacts with substrate. NADP(+) is bound at residue aspartate 179–alanine 181. Arginine 187–glycine 188 provides a ligand contact to substrate. Residue glutamate 189 is the Charge relay system of the active site. NADP(+)-binding positions include histidine 230–lysine 231 and arginine 305–arginine 311.

The protein belongs to the LDH2/MDH2 oxidoreductase family. As to quaternary structure, homodimer.

The catalysed reaction is L-proline + NAD(+) = 1-pyrroline-2-carboxylate + NADH + H(+). It catalyses the reaction L-proline + NADP(+) = 1-pyrroline-2-carboxylate + NADPH + H(+). Its function is as follows. Catalyzes the reduction of Delta(1)-pyrroline-2-carboxylate (Pyr2C) to L-proline, using NADPH as the electron donor. Is likely involved in a degradation pathway that converts trans-3-hydroxy-L-proline (t3LHyp) to L-proline, which would allow A.tumefaciens to grow on t3LHyp as a sole carbon source. This chain is Delta(1)-pyrroline-2-carboxylate reductase, found in Agrobacterium fabrum (strain C58 / ATCC 33970) (Agrobacterium tumefaciens (strain C58)).